The sequence spans 504 residues: NADH-quinone oxidoreductase subunit N (504 aa).

Helical transmembrane passes span 9-29 (IALL…LSII), 38-58 (AVLT…HMMW), 78-98 (VLYV…GYVW), 114-134 (LLIA…IVLF), 135-155 (LGIE…VFSK), 164-184 (YIIL…FIYC), 216-236 (IVIG…CVPF), 254-274 (YLAT…LLIL), 282-302 (LHIF…LMAI), 309-329 (RMLA…LIAL), 341-361 (ISVY…IVNI), 392-412 (VIFV…GFIG), 425-447 (LWFL…LKII), and 476-496 (FMVI…QFIV).

It belongs to the complex I subunit 2 family. In terms of assembly, NDH-1 is composed of 13 different subunits. Subunits NuoA, H, J, K, L, M, N constitute the membrane sector of the complex.

It is found in the cell inner membrane. It carries out the reaction a quinone + NADH + 5 H(+)(in) = a quinol + NAD(+) + 4 H(+)(out). Its function is as follows. NDH-1 shuttles electrons from NADH, via FMN and iron-sulfur (Fe-S) centers, to quinones in the respiratory chain. The immediate electron acceptor for the enzyme in this species is believed to be ubiquinone. Couples the redox reaction to proton translocation (for every two electrons transferred, four hydrogen ions are translocated across the cytoplasmic membrane), and thus conserves the redox energy in a proton gradient. The sequence is that of NADH-quinone oxidoreductase subunit N from Blochmanniella floridana.